A 495-amino-acid polypeptide reads, in one-letter code: Maternal protein exuperantia-1 (495 aa).

2 disordered regions span residues 197 to 217 (DESANKENEPENVNRNGSSND) and 377 to 495 (TIKP…AATN). 2 stretches are compositionally biased toward polar residues: residues 207–216 (ENVNRNGSSN) and 398–414 (AASSKNGAMSSRSTSTE).

Its function is as follows. Ensures the proper localization of the mRNA of the bicoid gene to the anterior regions of the oocyte thus playing a fundamental role in the establishment of the polarity of the oocyte. May bind the bcd mRNA. This chain is Maternal protein exuperantia-1 (exu1), found in Drosophila pseudoobscura pseudoobscura (Fruit fly).